The chain runs to 378 residues: Succinyl-diaminopimelate desuccinylase (378 aa).

Zn(2+) is bound at residue His67. Asp69 is an active-site residue. Zn(2+) is bound at residue Asp100. Catalysis depends on Glu134, which acts as the Proton acceptor. The Zn(2+) site is built by Glu135, Glu163, and His349.

The protein belongs to the peptidase M20A family. DapE subfamily. Homodimer. The cofactor is Zn(2+). Co(2+) is required as a cofactor.

The enzyme catalyses N-succinyl-(2S,6S)-2,6-diaminopimelate + H2O = (2S,6S)-2,6-diaminopimelate + succinate. Its pathway is amino-acid biosynthesis; L-lysine biosynthesis via DAP pathway; LL-2,6-diaminopimelate from (S)-tetrahydrodipicolinate (succinylase route): step 3/3. Its function is as follows. Catalyzes the hydrolysis of N-succinyl-L,L-diaminopimelic acid (SDAP), forming succinate and LL-2,6-diaminopimelate (DAP), an intermediate involved in the bacterial biosynthesis of lysine and meso-diaminopimelic acid, an essential component of bacterial cell walls. The sequence is that of Succinyl-diaminopimelate desuccinylase from Nitrosomonas eutropha (strain DSM 101675 / C91 / Nm57).